A 509-amino-acid chain; its full sequence is Maturase K (509 aa).

It belongs to the intron maturase 2 family. MatK subfamily.

Its subcellular location is the plastid. It localises to the chloroplast. Usually encoded in the trnK tRNA gene intron. Probably assists in splicing its own and other chloroplast group II introns. This is Maturase K from Nicotiana glutinosa (Tobacco).